The chain runs to 327 residues: MQQLTEIVEQALVIIDQASDLKALDDIRVDYLGKKGKITDMMKMMGSLSPEEKPAFGQAVNDAKQAIQQKLTERIDGLKSSELEAKLIAEKIDVTLPGRTQEIGGLHPVTRTIERIETFFGELGFSVKQGPEIEDDFHNFDALNISEHHPARADHDTFYFNPKLMLRTQTSGVQIRTMETEKPPLRIISPGRVYRNDYDQTHTPMFHQVEGLLVDEHVNFAELKGILHDFLRNFFEEDLQVRFRPSYFPFTEPSAEVDVMGKNGKWLEVLGCGMVHPNVLRSVGIDPEKYSGFAFGMGVERLTMLRYGVNDLRAFFENDLRFLKQFK.

Glu252 contributes to the Mg(2+) binding site.

The protein belongs to the class-II aminoacyl-tRNA synthetase family. Phe-tRNA synthetase alpha subunit type 1 subfamily. Tetramer of two alpha and two beta subunits. It depends on Mg(2+) as a cofactor.

The protein localises to the cytoplasm. The enzyme catalyses tRNA(Phe) + L-phenylalanine + ATP = L-phenylalanyl-tRNA(Phe) + AMP + diphosphate + H(+). This chain is Phenylalanine--tRNA ligase alpha subunit, found in Shewanella baltica (strain OS185).